The following is a 101-amino-acid chain: Large ribosomal subunit protein bL21 (101 aa).

The protein belongs to the bacterial ribosomal protein bL21 family. Part of the 50S ribosomal subunit. Contacts protein L20.

In terms of biological role, this protein binds to 23S rRNA in the presence of protein L20. The chain is Large ribosomal subunit protein bL21 from Anaeromyxobacter dehalogenans (strain 2CP-1 / ATCC BAA-258).